Here is a 938-residue protein sequence, read N- to C-terminus: Isoleucine--tRNA ligase (938 aa).

The 'HIGH' region signature appears at 58–68 (PYANGSIHIGH). Lysine 183 bears the N6-acetyllysine mark. An L-isoleucyl-5'-AMP-binding site is contributed by glutamate 561. Residues 602 to 606 (KMSKS) carry the 'KMSKS' region motif. ATP is bound at residue lysine 605. Zn(2+)-binding residues include cysteine 901, cysteine 904, cysteine 921, and cysteine 924.

The protein belongs to the class-I aminoacyl-tRNA synthetase family. IleS type 1 subfamily. Monomer. Zn(2+) serves as cofactor.

Its subcellular location is the cytoplasm. The catalysed reaction is tRNA(Ile) + L-isoleucine + ATP = L-isoleucyl-tRNA(Ile) + AMP + diphosphate. Catalyzes the attachment of isoleucine to tRNA(Ile). As IleRS can inadvertently accommodate and process structurally similar amino acids such as valine, to avoid such errors it has two additional distinct tRNA(Ile)-dependent editing activities. One activity is designated as 'pretransfer' editing and involves the hydrolysis of activated Val-AMP. The other activity is designated 'posttransfer' editing and involves deacylation of mischarged Val-tRNA(Ile). This chain is Isoleucine--tRNA ligase, found in Escherichia coli (strain ATCC 8739 / DSM 1576 / NBRC 3972 / NCIMB 8545 / WDCM 00012 / Crooks).